A 156-amino-acid polypeptide reads, in one-letter code: DNA gyrase inhibitor (156 aa).

This sequence belongs to the DNA gyrase inhibitor family. In terms of assembly, interacts with DNA gyrase.

It localises to the cytoplasm. Its function is as follows. Inhibits the supercoiling activity of DNA gyrase. Acts by inhibiting DNA gyrase at an early step, prior to (or at the step of) binding of DNA by the gyrase. It protects cells against toxins that target DNA gyrase, by inhibiting activity of these toxins and reducing the formation of lethal double-strand breaks in the cell. In Serratia proteamaculans (strain 568), this protein is DNA gyrase inhibitor.